Consider the following 1110-residue polypeptide: Brother of CDO (1110 aa).

The N-terminal stretch at 1 to 25 (MTTCRRERPILTLLWILMATAGCLA) is a signal peptide. The Extracellular portion of the chain corresponds to 26-850 (DLNEVPQVTV…MVARASDLPY (825 aa)). 4 consecutive Ig-like C2-type domains span residues 31 to 118 (PQVT…ATVT), 124 to 208 (DFKL…VKTS), 229 to 310 (PLEA…VILY), and 318 to 402 (PEVT…VQLR). Intrachain disulfides connect Cys52-Cys101, Cys145-Cys195, Cys247-Cys294, and Cys339-Cys386. Residues Asn60, Asn71, Asn93, Asn184, and Asn270 are each glycosylated (N-linked (GlcNAc...) asparagine). The interval 407–458 (DTTLRPGRDTKPIAATPPMPPSRPSRPDQMLREQPGLVKPPTSSVQPTSLKC) is disordered. Residues 421-430 (ATPPMPPSRP) show a composition bias toward pro residues. 3 consecutive Fibronectin type-III domains span residues 469-566 (APII…GRRP), 603-698 (APDR…VVSG), and 707-807 (PVAG…TKAR). An N-linked (GlcNAc...) asparagine glycan is attached at Asn512. The disordered stretch occupies residues 561–610 (RTGRRPKPEIVASKEQQIQRDDPGASLQSSSQPDHGRLSPPEAPDRPTIS). N-linked (GlcNAc...) asparagine glycans are attached at residues Asn720 and Asn754. The tract at residues 809–828 (FSGQPGRPPPLTLAPPQPPP) is disordered. Residues 814–828 (GRPPPLTLAPPQPPP) are compositionally biased toward pro residues. The helical transmembrane segment at 851–871 (LIVGVVLGSIVLIIVTFIPFC) threads the bilayer. Over 872–1110 (LWRAWSKQKH…VSFETPPPTI (239 aa)) the chain is Cytoplasmic. The interval 1065-1110 (SDSCQVGGGDWSSQHPSGTYTGQERGMRFSPSPSVHVSFETPPPTI) is disordered. A compositionally biased stretch (polar residues) spans 1075 to 1086 (WSSQHPSGTYTG).

In terms of assembly, part of a complex that contains BOC, CDON, NEO1, cadherins and CTNNB1. Interacts with SHH, DHH and IHH. Interacts with NTN3. Interacts with CDH2 and CTNNB1. Interacts with CDH15 only during the early stages of myoblast differentiation. Highly expressed in embryonic somites, limb buds, dermomyotomes and in the neural tube.

The protein localises to the membrane. Component of a cell-surface receptor complex that mediates cell-cell interactions between muscle precursor cells. Promotes differentiation of myogenic cells. This is Brother of CDO (Boc) from Mus musculus (Mouse).